Consider the following 311-residue polypeptide: Cell division protein ZipA (311 aa).

Residues 1–6 (MENLQL) lie on the Periplasmic side of the membrane. The chain crosses the membrane as a helical span at residues 7-27 (VLFVLGAIAIIAVLVHGFWSI). The Cytoplasmic portion of the chain corresponds to 28-311 (RKQQPKSLKE…YLQRIRAQLD (284 aa)). The interval 46–114 (DQASVRDSQG…FALSDEPVQR (69 aa)) is disordered. Composition is skewed to basic and acidic residues over residues 62–83 (GEVR…DKPV) and 94–103 (RDVEDSRHEQ).

Belongs to the ZipA family. In terms of assembly, interacts with FtsZ via their C-terminal domains.

The protein localises to the cell inner membrane. Essential cell division protein that stabilizes the FtsZ protofilaments by cross-linking them and that serves as a cytoplasmic membrane anchor for the Z ring. Also required for the recruitment to the septal ring of downstream cell division proteins. The polypeptide is Cell division protein ZipA (Shewanella woodyi (strain ATCC 51908 / MS32)).